The following is a 131-amino-acid chain: Glycine cleavage system H protein (131 aa).

Positions 24–106 constitute a Lipoyl-binding domain; the sequence is RVTVGISDHA…YGEGWIFVVE (83 aa). Lys65 carries the N6-lipoyllysine modification.

Belongs to the GcvH family. The glycine cleavage system is composed of four proteins: P, T, L and H. (R)-lipoate is required as a cofactor.

Functionally, the glycine cleavage system catalyzes the degradation of glycine. The H protein shuttles the methylamine group of glycine from the P protein to the T protein. In Xanthomonas axonopodis pv. citri (strain 306), this protein is Glycine cleavage system H protein.